Reading from the N-terminus, the 186-residue chain is Ribosome-recycling factor (186 aa).

Belongs to the RRF family.

Its subcellular location is the cytoplasm. Responsible for the release of ribosomes from messenger RNA at the termination of protein biosynthesis. May increase the efficiency of translation by recycling ribosomes from one round of translation to another. The polypeptide is Ribosome-recycling factor (Cupriavidus necator (strain ATCC 17699 / DSM 428 / KCTC 22496 / NCIMB 10442 / H16 / Stanier 337) (Ralstonia eutropha)).